The chain runs to 420 residues: Glutamate-1-semialdehyde 2,1-aminomutase (420 aa).

Lysine 259 carries the N6-(pyridoxal phosphate)lysine modification.

This sequence belongs to the class-III pyridoxal-phosphate-dependent aminotransferase family. HemL subfamily. Homodimer. Requires pyridoxal 5'-phosphate as cofactor.

It localises to the cytoplasm. The enzyme catalyses (S)-4-amino-5-oxopentanoate = 5-aminolevulinate. It participates in porphyrin-containing compound metabolism; protoporphyrin-IX biosynthesis; 5-aminolevulinate from L-glutamyl-tRNA(Glu): step 2/2. The protein is Glutamate-1-semialdehyde 2,1-aminomutase of Nautilia profundicola (strain ATCC BAA-1463 / DSM 18972 / AmH).